A 203-amino-acid chain; its full sequence is Small ribosomal subunit protein uS4 (203 aa).

The segment at 22–45 (TGKELARRPYKPGQHGPNSRGKVS) is disordered. The S4 RNA-binding domain occupies 93-156 (QRLDNVVYRL…QNISTIKEAV (64 aa)).

This sequence belongs to the universal ribosomal protein uS4 family. In terms of assembly, part of the 30S ribosomal subunit. Contacts protein S5. The interaction surface between S4 and S5 is involved in control of translational fidelity.

Its function is as follows. One of the primary rRNA binding proteins, it binds directly to 16S rRNA where it nucleates assembly of the body of the 30S subunit. Functionally, with S5 and S12 plays an important role in translational accuracy. The polypeptide is Small ribosomal subunit protein uS4 (Enterococcus faecalis (strain ATCC 700802 / V583)).